A 147-amino-acid chain; its full sequence is Ubiquitin-conjugating enzyme E2 D2B (147 aa).

Residues Met1 to Met147 form the UBC core domain. The Glycyl thioester intermediate role is filled by Cys85.

The protein belongs to the ubiquitin-conjugating enzyme family. As to quaternary structure, interacts with CNOT4 (via RING domain). Testis-specific. Mainly expressed in the round spermatids (at protein level).

It carries out the reaction S-ubiquitinyl-[E1 ubiquitin-activating enzyme]-L-cysteine + [E2 ubiquitin-conjugating enzyme]-L-cysteine = [E1 ubiquitin-activating enzyme]-L-cysteine + S-ubiquitinyl-[E2 ubiquitin-conjugating enzyme]-L-cysteine.. It participates in protein modification; protein ubiquitination. In terms of biological role, catalyzes the covalent attachment of ubiquitin to other proteins. Mediates the selective degradation of short-lived and abnormal proteins. Functions in the E6/E6-AP-induced ubiquitination of p53/TP53. Mediates ubiquitination of PEX5 and SQSTM1 and autoubiquitination of STUB1 and TRAF6. Involved in the signal-induced conjugation and subsequent degradation of NFKBIA, FBXW2-mediated GCM1 ubiquitination and degradation, MDM2-dependent degradation of p53/TP53 and the activation of MAVS in the mitochondria by RIGI in response to viral infection Plays a role in early maturation of the testis. This chain is Ubiquitin-conjugating enzyme E2 D2B (Ube2d2b), found in Rattus norvegicus (Rat).